Consider the following 748-residue polypeptide: Peptidyl serine alpha-galactosyltransferase (748 aa).

A signal peptide spans 1–26; the sequence is MVAVFHGPLVLGALLLLLALQHGASA. Over 27–710 the chain is Extracellular; that stretch reads EEPGFANRTG…GPSLHSLLGR (684 aa). N-linked (GlcNAc...) asparagine glycans are attached at residues N33, N184, and N297. The ShKT domain maps to 415-449; it reads CQDFHPKCEEWKESGECTKNENYMTENCRKTCDKC. 3 disulfide bridges follow: C415–C449, C422–C442, and C431–C446. 2 disordered regions span residues 474–576 and 611–670; these read ELQP…ADPK and EVPK…KKNI. The segment covering 531 to 565 has biased composition (pro residues); it reads SPPPSPPPASPPPVDSPPPMSPPPESPSPDKPPPK. A compositionally biased stretch (basic and acidic residues) spans 611–637; that stretch reads EVPKRTKATDEEEEAPKAKHAESHLTL. A helical membrane pass occupies residues 711-731; the sequence is LNTWQALVLWLVVVVAFLALV. The Cytoplasmic segment spans residues 732–748; it reads PRIAKLRRRQRSGMRTE.

The cofactor is Mn(2+).

The protein localises to the membrane. Glycosyltransferase involved in the O-galactosylation of several proteins including extensins. Catalyzes the transfer of alpha-galactosyl to Ser residues. Hydroxylation of proline residues adjacent to the serine acceptor is required for activity. Utilizes selectively UDP-galactose as a donor nucleotide sugar. In Chlamydomonas reinhardtii (Chlamydomonas smithii), this protein is Peptidyl serine alpha-galactosyltransferase.